The following is a 462-amino-acid chain: Phosphoglycerate kinase, chloroplastic (462 aa).

A chloroplast-targeting transit peptide spans 1–61 (MALSMKMRAN…AGRSRIVVEA (61 aa)). Positions 83, 84, 86, 101, 123, 124, 126, 127, 183, 215, and 216 each coordinate (2R)-3-phosphoglycerate. Glycine 261 contacts ADP. Position 261 (glycine 261) interacts with CDP. Positions 263 and 267 each coordinate AMP. ATP is bound at residue lysine 267. An ADP-binding site is contributed by glycine 285. Position 285 (glycine 285) interacts with CDP. AMP contacts are provided by glycine 286 and glycine 358. Positions 286 and 358 each coordinate ATP. 2 residues coordinate CDP: glycine 383 and phenylalanine 388. Phenylalanine 388 is a binding site for ADP. AMP is bound at residue glutamate 389. Glutamate 389, aspartate 420, and serine 421 together coordinate ATP. Aspartate 420 is a Mg(2+) binding site.

Belongs to the phosphoglycerate kinase family. In terms of assembly, monomer. Mg(2+) serves as cofactor.

The protein localises to the plastid. The protein resides in the chloroplast. It carries out the reaction (2R)-3-phosphoglycerate + ATP = (2R)-3-phospho-glyceroyl phosphate + ADP. It participates in carbohydrate biosynthesis; Calvin cycle. The polypeptide is Phosphoglycerate kinase, chloroplastic (PGK) (Volvox carteri (Green alga)).